A 279-amino-acid chain; its full sequence is Small ribosomal subunit protein uS9m (279 aa).

Belongs to the universal ribosomal protein uS9 family.

It is found in the mitochondrion. In Eremothecium gossypii (strain ATCC 10895 / CBS 109.51 / FGSC 9923 / NRRL Y-1056) (Yeast), this protein is Small ribosomal subunit protein uS9m (MRPS9).